A 442-amino-acid polypeptide reads, in one-letter code: Proline--tRNA ligase (442 aa).

Belongs to the class-II aminoacyl-tRNA synthetase family. ProS type 2 subfamily. Homodimer.

The protein localises to the cytoplasm. It catalyses the reaction tRNA(Pro) + L-proline + ATP = L-prolyl-tRNA(Pro) + AMP + diphosphate. Catalyzes the attachment of proline to tRNA(Pro) in a two-step reaction: proline is first activated by ATP to form Pro-AMP and then transferred to the acceptor end of tRNA(Pro). This is Proline--tRNA ligase from Brucella abortus (strain S19).